Here is a 197-residue protein sequence, read N- to C-terminus: Protein RmlC homolog (197 aa).

H76 functions as the Proton acceptor in the catalytic mechanism. Y140 functions as the Proton donor in the catalytic mechanism.

Its function is as follows. Could catalyze a 3,5-epimerization. The polypeptide is Protein RmlC homolog (rfbC) (Streptococcus pyogenes serotype M6 (strain ATCC BAA-946 / MGAS10394)).